Consider the following 892-residue polypeptide: Alpha-actinin-1 (892 aa).

An N-acetylmethionine modification is found at methionine 1. An actin-binding region spans residues 1–247 (MDHYDSQQTN…IMTYVSSFYH (247 aa)). Residue serine 6 is modified to Phosphoserine. At tyrosine 12 the chain carries Phosphotyrosine; by FAK1. Calponin-homology (CH) domains follow at residues 31-135 (KQQR…LRFA) and 144-250 (TSAK…HAFS). Lysine 95 and lysine 195 each carry N6-acetyllysine. 4 Spectrin repeats span residues 274–384 (QLME…WLLN), 394–499 (HLAE…ALER), 509–620 (QLYL…ALTE), and 630–733 (RLRK…EVEN). The interval 274-733 (QLMEDYEKLA…IARTINEVEN (460 aa)) is interaction with DDN. Serine 471 is modified (phosphoserine). Position 676 is an N6-acetyllysine (lysine 676). Serine 677 carries the phosphoserine modification. EF-hand domains follow at residues 746 to 781 (EQMN…LGYD) and 787 to 822 (QGEA…ETAD). The Ca(2+) site is built by aspartate 759, aspartate 761, serine 763, threonine 765, and glutamate 770. Serine 890 is modified (phosphoserine).

The protein belongs to the alpha-actinin family. As to quaternary structure, homodimer; antiparallel. Interacts with MYOZ2, TTID and LPP. Interacts with DDN. Interacts with PSD. Interacts with MICALL2. Interacts with DNM2 and CTTN. Interacts with PDLIM1. Interacts with PDLIM2. Interacts with PDLIM4 (via PDZ domain). Interacts with IGSF8.

Its subcellular location is the cytoplasm. It is found in the cytoskeleton. The protein localises to the myofibril. It localises to the sarcomere. The protein resides in the z line. Its subcellular location is the cell membrane. It is found in the cell junction. The protein localises to the cell projection. It localises to the ruffle. Its function is as follows. F-actin cross-linking protein which is thought to anchor actin to a variety of intracellular structures. Association with IGSF8 regulates the immune synapse formation and is required for efficient T-cell activation. The chain is Alpha-actinin-1 (ACTN1) from Macaca fascicularis (Crab-eating macaque).